The chain runs to 648 residues: Pesticidal crystal protein Cry19Aa (648 aa).

Belongs to the delta endotoxin family.

In terms of biological role, promotes colloidosmotic lysis by binding to the midgut epithelial cells of mosquitos. In Bacillus thuringiensis subsp. jegathesan, this protein is Pesticidal crystal protein Cry19Aa (cry19Aa).